The following is a 199-amino-acid chain: NAD(P)H dehydrogenase (quinone) (199 aa).

In terms of domain architecture, Flavodoxin-like spans 4 to 190; that stretch reads MLVLYYSAYG…DGARFQGRRV (187 aa). Residues 10–15 and 78–80 each bind FMN; these read SAYGYM and TRY. Tyr12 provides a ligand contact to NAD(+). Trp98 is a substrate binding site. FMN is bound by residues 113-119 and His134; that span reads STATQHG. Residues 158 to 181 are disordered; that stretch reads GAPYGMTTTADGDGSRQPSAQELD. Positions 163 to 177 are enriched in polar residues; it reads MTTTADGDGSRQPSA.

The protein belongs to the WrbA family. It depends on FMN as a cofactor.

The enzyme catalyses a quinone + NADH + H(+) = a quinol + NAD(+). The catalysed reaction is a quinone + NADPH + H(+) = a quinol + NADP(+). The sequence is that of NAD(P)H dehydrogenase (quinone) from Brucella abortus (strain S19).